A 391-amino-acid polypeptide reads, in one-letter code: NAD(P)H-quinone oxidoreductase subunit H, chloroplastic (391 aa).

The protein belongs to the complex I 49 kDa subunit family. NDH is composed of at least 16 different subunits, 5 of which are encoded in the nucleus.

It is found in the plastid. It localises to the chloroplast thylakoid membrane. It catalyses the reaction a plastoquinone + NADH + (n+1) H(+)(in) = a plastoquinol + NAD(+) + n H(+)(out). The catalysed reaction is a plastoquinone + NADPH + (n+1) H(+)(in) = a plastoquinol + NADP(+) + n H(+)(out). NDH shuttles electrons from NAD(P)H:plastoquinone, via FMN and iron-sulfur (Fe-S) centers, to quinones in the photosynthetic chain and possibly in a chloroplast respiratory chain. The immediate electron acceptor for the enzyme in this species is believed to be plastoquinone. Couples the redox reaction to proton translocation, and thus conserves the redox energy in a proton gradient. The polypeptide is NAD(P)H-quinone oxidoreductase subunit H, chloroplastic (Nephroselmis olivacea (Green alga)).